Reading from the N-terminus, the 126-residue chain is Protein FMP49, mitochondrial (126 aa).

The protein resides in the mitochondrion. The sequence is that of Protein FMP49, mitochondrial from Saccharomyces cerevisiae (strain ATCC 204508 / S288c) (Baker's yeast).